The following is a 366-amino-acid chain: Carbamoyl phosphate synthase small chain (366 aa).

A CPSase region spans residues 1 to 171; sequence MLEKRYLVLE…KTPYVSTGSD (171 aa). Residues Ser-47, Gly-221, and Gly-223 each contribute to the L-glutamine site. A Glutamine amidotransferase type-1 domain is found at 173-360; it reads SVVLLDFGKK…IAMMKDFKEK (188 aa). Cys-248 serves as the catalytic Nucleophile. Residues Leu-249, Gln-252, Asn-290, Gly-292, and Tyr-293 each coordinate L-glutamine. Catalysis depends on residues His-333 and Glu-335.

It belongs to the CarA family. In terms of assembly, composed of two chains; the small (or glutamine) chain promotes the hydrolysis of glutamine to ammonia, which is used by the large (or ammonia) chain to synthesize carbamoyl phosphate. Tetramer of heterodimers (alpha,beta)4.

The enzyme catalyses hydrogencarbonate + L-glutamine + 2 ATP + H2O = carbamoyl phosphate + L-glutamate + 2 ADP + phosphate + 2 H(+). It catalyses the reaction L-glutamine + H2O = L-glutamate + NH4(+). It functions in the pathway amino-acid biosynthesis; L-arginine biosynthesis; carbamoyl phosphate from bicarbonate: step 1/1. The protein operates within pyrimidine metabolism; UMP biosynthesis via de novo pathway; (S)-dihydroorotate from bicarbonate: step 1/3. In terms of biological role, small subunit of the glutamine-dependent carbamoyl phosphate synthetase (CPSase). CPSase catalyzes the formation of carbamoyl phosphate from the ammonia moiety of glutamine, carbonate, and phosphate donated by ATP, constituting the first step of 2 biosynthetic pathways, one leading to arginine and/or urea and the other to pyrimidine nucleotides. The small subunit (glutamine amidotransferase) binds and cleaves glutamine to supply the large subunit with the substrate ammonia. The sequence is that of Carbamoyl phosphate synthase small chain from Staphylococcus epidermidis (strain ATCC 12228 / FDA PCI 1200).